The primary structure comprises 413 residues: MRDDRALNVTSEIGRLKTVLLHRPGEEIENLTPDLLDRLLFDDIPYLKVAREEHDAFAQTLREAGVEVLYLEVLAAEAIETSDEVKQQFISEFIDEAGVESERLKEALIEYFNSFSDNKSMVDKMMAGVRKEELKDYHRESLYDQVNNVYPFVCDPMPNLYFTRDPFATIGHGITLNHMRTDTRNRETIFAKYIFRHHPRFEGKDVPFWFNRDEKTSLEGGDELILSKEVLAVGISQRTDSASVEKLARKLLYYPDTSFKTVLAFKIPVSRAFMHLDTVFTQVDYDKFTVHPGIVGPLEVYAITKDPEKDVQLIAVEECDTLENILKKYLKRDIELIKCGGGDEIIAAREQWNDGSNTLAIAPGEVVVYSRNYVTNEILEKKGIKLHVIPSSELSRGRGGPRCMSMPLIREDL.

The Amidino-cysteine intermediate role is filled by C403.

It belongs to the arginine deiminase family.

Its subcellular location is the cytoplasm. The enzyme catalyses L-arginine + H2O = L-citrulline + NH4(+). It participates in amino-acid degradation; L-arginine degradation via ADI pathway; carbamoyl phosphate from L-arginine: step 1/2. This chain is Arginine deiminase, found in Clostridium perfringens (strain SM101 / Type A).